The primary structure comprises 109 residues: MMTYMSFEEAIKTLDSGIIIEIEVTPGSRSLSVPSGYNEWRKRIAVKLTKNAQKGKANEQLIESLAELFGISSSEILINSGATSSKKSLLIKGISYQQAVSVLGARLKE.

It belongs to the UPF0235 family.

The sequence is that of UPF0235 protein MA_4097 from Methanosarcina acetivorans (strain ATCC 35395 / DSM 2834 / JCM 12185 / C2A).